Reading from the N-terminus, the 243-residue chain is 3-deoxy-manno-octulosonate cytidylyltransferase (243 aa).

It belongs to the KdsB family.

Its subcellular location is the cytoplasm. The catalysed reaction is 3-deoxy-alpha-D-manno-oct-2-ulosonate + CTP = CMP-3-deoxy-beta-D-manno-octulosonate + diphosphate. Its pathway is nucleotide-sugar biosynthesis; CMP-3-deoxy-D-manno-octulosonate biosynthesis; CMP-3-deoxy-D-manno-octulosonate from 3-deoxy-D-manno-octulosonate and CTP: step 1/1. It participates in bacterial outer membrane biogenesis; lipopolysaccharide biosynthesis. Its function is as follows. Activates KDO (a required 8-carbon sugar) for incorporation into bacterial lipopolysaccharide in Gram-negative bacteria. This Helicobacter pylori (strain P12) protein is 3-deoxy-manno-octulosonate cytidylyltransferase.